Here is a 268-residue protein sequence, read N- to C-terminus: Tryptophan synthase alpha chain (268 aa).

Active-site proton acceptor residues include Glu49 and Asp60.

It belongs to the TrpA family. In terms of assembly, tetramer of two alpha and two beta chains.

The catalysed reaction is (1S,2R)-1-C-(indol-3-yl)glycerol 3-phosphate + L-serine = D-glyceraldehyde 3-phosphate + L-tryptophan + H2O. It participates in amino-acid biosynthesis; L-tryptophan biosynthesis; L-tryptophan from chorismate: step 5/5. The alpha subunit is responsible for the aldol cleavage of indoleglycerol phosphate to indole and glyceraldehyde 3-phosphate. The chain is Tryptophan synthase alpha chain from Vibrio metschnikovii.